The following is a 481-amino-acid chain: Proton-coupled amino acid transporter 2 (481 aa).

Residues 1 to 56 lie on the Cytoplasmic side of the membrane; that stretch reads MSVTKSAGSPQVAATVKLDLVSFPESAKKVQSQDPNPVNGSSSESSEKTKGITGFQ. The interval 26 to 49 is disordered; it reads SAKKVQSQDPNPVNGSSSESSEKT. Residues 29–40 show a composition bias toward polar residues; it reads KVQSQDPNPVNG. Residues 57–77 traverse the membrane as a helical segment; the sequence is TLVHLVKGNMGTGILGLPLAV. The Extracellular portion of the chain corresponds to 78-79; the sequence is KN. The chain crosses the membrane as a helical span at residues 80 to 100; the sequence is AGILMGPLSLLVMGLIACHCM. The Cytoplasmic portion of the chain corresponds to 101-146; the sequence is HILVRCAQRFCHRLNKPFMDYGDTVMHGLASSPNTWLQSHAHWGRH. Residues 147–167 form a helical membrane-spanning segment; sequence AVSFFLIVTQLGFCCVYIVFL. Over 168–195 the chain is Extracellular; the sequence is ADNLKQVVEAVNSTTISCHKNETVVLTP. Residues 196–216 traverse the membrane as a helical segment; it reads TIDSRLYMLAFLPVLGLLVFI. At 217–220 the chain is on the cytoplasmic side; it reads RNLR. A helical transmembrane segment spans residues 221-241; it reads VLTIFSLLANVSMLVSLVIIG. Over 242-262 the chain is Extracellular; sequence QYIIQGIPDPSQLPLVASWKT. Residues 263-283 traverse the membrane as a helical segment; that stretch reads YPLFFGTAIFSFESIGVVLPL. The Cytoplasmic segment spans residues 284–295; sequence ENKMKDARRFPT. A helical membrane pass occupies residues 296-316; sequence ILSLGMSIITTLYIAIGALGY. Residues 317–343 are Extracellular-facing; sequence LRFGDDIKASITLNLPNCWLYQSVKLL. The helical transmembrane segment at 344-364 threads the bilayer; the sequence is YVVGILCTHALQFYVPAEIII. Residues 365 to 377 lie on the Cytoplasmic side of the membrane; sequence PLAVSQVSKRWAL. Residues 378–398 traverse the membrane as a helical segment; the sequence is PVDLSIRLALVCVTCMLAILI. Residues 399–402 are Extracellular-facing; sequence PRLD. Residues 403–423 form a helical membrane-spanning segment; it reads LVLSLVGSVSSSALALIIPPL. Residues 424 to 444 are Cytoplasmic-facing; it reads LEVTTYYGEGMSPLTITKDAL. A helical membrane pass occupies residues 445–465; it reads ISILGFMGFVVGTYQALDELI. Residues 466-481 are Extracellular-facing; sequence RSGNSLPLSNSTMFIQ.

The protein belongs to the amino acid/polyamine transporter 2 family. Expressed in lung and spleen, and to a lower extent in brain, heart, kidney and skeletal muscle.

The protein localises to the cell membrane. It is found in the endoplasmic reticulum membrane. The protein resides in the recycling endosome membrane. It catalyses the reaction glycine(in) + H(+)(in) = glycine(out) + H(+)(out). The enzyme catalyses L-alanine(in) + H(+)(in) = L-alanine(out) + H(+)(out). It carries out the reaction D-alanine(in) + H(+)(in) = D-alanine(out) + H(+)(out). The catalysed reaction is L-proline(out) + H(+)(out) = L-proline(in) + H(+)(in). It catalyses the reaction D-proline(out) + H(+)(out) = D-proline(in) + H(+)(in). The enzyme catalyses 4-hydroxy-L-proline(in) + H(+)(in) = 4-hydroxy-L-proline(out) + H(+)(out). It carries out the reaction L-serine(in) + H(+)(in) = L-serine(out) + H(+)(out). The catalysed reaction is D-serine(out) + H(+)(out) = D-serine(in) + H(+)(in). It catalyses the reaction beta-alanine(in) + H(+)(in) = beta-alanine(out) + H(+)(out). The enzyme catalyses 4-aminobutanoate(in) + H(+)(in) = 4-aminobutanoate(out) + H(+)(out). It carries out the reaction sarcosine(in) + H(+)(in) = sarcosine(out) + H(+)(out). The catalysed reaction is N,N-dimethylglycine(in) + H(+)(in) = N,N-dimethylglycine(out) + H(+)(out). Inhibited by L- and D-pipecolic acid, nipecotic acid, isonipecotic acid, L- and D-cycloserine, and L-2-azetidine-carboxylate. Its function is as follows. Electrogenic proton/amino acid symporter with a high selectivity for the small side chains amino acids glycine, alanine and proline, where both L- and D-enantiomers are transported. Extension of the backbone length, as in beta-alanine and 4-aminobutanoate or methylation of the amino group, as in sarcosine and N,N-dimethylglycine, are also tolerated but decrease transport efficiency. A free carboxyl group is preferred. This chain is Proton-coupled amino acid transporter 2, found in Rattus norvegicus (Rat).